Here is a 168-residue protein sequence, read N- to C-terminus: Probable deoxyuridine 5'-triphosphate nucleotidohydrolase (168 aa).

This sequence belongs to the dCTP deaminase family. Archaeal dUTPase subfamily.

It carries out the reaction dUTP + H2O = dUMP + diphosphate + H(+). Its pathway is pyrimidine metabolism; dUMP biosynthesis; dUMP from dCTP (dUTP route): step 2/2. Functionally, this enzyme is involved in nucleotide metabolism: it produces dUMP, the immediate precursor of thymidine nucleotides and it decreases the intracellular concentration of dUTP so that uracil cannot be incorporated into DNA. The protein is Probable deoxyuridine 5'-triphosphate nucleotidohydrolase of Archaeoglobus fulgidus (strain ATCC 49558 / DSM 4304 / JCM 9628 / NBRC 100126 / VC-16).